The sequence spans 1228 residues: Probable phospholipid-transporting ATPase 5 (1228 aa).

Over 1–74 (MARGRIRSKL…TTRYNLITFF (74 aa)) the chain is Cytoplasmic. The chain crosses the membrane as a helical span at residues 75–96 (PKSLYEQFHRAANLYFLVAAIL). Residues 97–100 (SVFP) lie on the Extracellular side of the membrane. The helical transmembrane segment at 101 to 123 (LSPFNKWSMIAPLVFVVGLSMLK) threads the bilayer. Residues 124–305 (EALEDWRRFM…SRIERTMDYI (182 aa)) are Cytoplasmic-facing. A helical membrane pass occupies residues 306–327 (IYTLLVLLILISCISSSGFAWE). At 328–359 (TEFHMPKMWYLRPGEPIDFTNPINPIYAGVVH) the chain is on the extracellular side. A helical membrane pass occupies residues 360–377 (LITALLLYGYLIPISLYV). Residues 378–934 (SIEVVKVWQA…HGHWCYKRIA (557 aa)) are Cytoplasmic-facing. Catalysis depends on Asp425, which acts as the 4-aspartylphosphate intermediate. A Glycyl lysine isopeptide (Lys-Gly) (interchain with G-Cter in ubiquitin) cross-link involves residue Lys616. 2 residues coordinate Mg(2+): Asp879 and Asp883. A helical membrane pass occupies residues 935–954 (QMICYFFYKNIAFGLTLFYF). Residues 955–968 (EAFTGFSGQSVYND) lie on the Extracellular side of the membrane. The chain crosses the membrane as a helical span at residues 969–988 (YYLLLFNVVLTSLPVIALGV). At 989–1018 (FEQDVSSEICLQFPALYQQGTKNLFFDWSR) the chain is on the cytoplasmic side. Residues 1019-1041 (ILGWMCNGVYASLVIFFLNIGII) traverse the membrane as a helical segment. Residues 1042 to 1054 (YSQAFRDNGQTAD) lie on the Extracellular side of the membrane. The helical transmembrane segment at 1055–1077 (MDAVGTTMFTCIIWAANVQIALT) threads the bilayer. Residues 1078 to 1083 (MSHFTW) are Cytoplasmic-facing. The chain crosses the membrane as a helical span at residues 1084 to 1104 (IQHVLIWGSIGMWYLFVAIYS). At 1105–1117 (MMPPSYSGNIYRI) the chain is on the extracellular side. Residues 1118–1146 (LDEILAPAPIYWMATLLVTVAAVLPYVAH) form a helical membrane-spanning segment. Topologically, residues 1147–1228 (IAFQRFLNPL…AQDAMSPRSL (82 aa)) are cytoplasmic.

This sequence belongs to the cation transport ATPase (P-type) (TC 3.A.3) family. Type IV subfamily.

The protein localises to the membrane. The catalysed reaction is ATP + H2O + phospholipidSide 1 = ADP + phosphate + phospholipidSide 2.. Its function is as follows. Involved in transport of phospholipids. In Arabidopsis thaliana (Mouse-ear cress), this protein is Probable phospholipid-transporting ATPase 5.